The chain runs to 321 residues: Phosphate metabolism protein 8 (321 aa).

It belongs to the SSM1 family.

May be involved in phosphate metabolism. The protein is Phosphate metabolism protein 8 (PHM8) of Saccharomyces cerevisiae (strain ATCC 204508 / S288c) (Baker's yeast).